A 252-amino-acid polypeptide reads, in one-letter code: MKAEIITVGDELLTGNTVDSNSAFIASKLTEKGYLVRRITTVGDDVEEIKSIILEALDRKPDVLVISGGLGPTHDDVTMLAVSKALNRELELCEECLERIRKFYVELHKKGLIDDPELNEARKKMAYLPKGATPLQNTEGAAPGAFIEHEGIKIFVLPGMPREMKAMLLNEVLPRLGERTFIQKKYLAEITDESKLAPILSEAIRKFNVRIHSSPKGFGKYIGIIIFGEDEEIIEKVIEFMQSRGISFKEGW.

It belongs to the CinA family.

The sequence is that of Protein PYRAB15930 from Pyrococcus abyssi (strain GE5 / Orsay).